A 301-amino-acid chain; its full sequence is CPX chromosomal region candidate gene 1 protein (301 aa).

A disordered region spans residues 1–77 (MSYPTKEGSD…ENSELETEIQ (77 aa)). Over residues 44–60 (VETNPINREPGTATSQE) the composition is skewed to polar residues.

Expressed in a variety of fetal tissues.

This chain is CPX chromosomal region candidate gene 1 protein (CPXCR1), found in Homo sapiens (Human).